Consider the following 446-residue polypeptide: UDP-N-acetylmuramoylalanine--D-glutamate ligase (446 aa).

Glycine 115–threonine 121 provides a ligand contact to ATP.

This sequence belongs to the MurCDEF family.

Its subcellular location is the cytoplasm. It catalyses the reaction UDP-N-acetyl-alpha-D-muramoyl-L-alanine + D-glutamate + ATP = UDP-N-acetyl-alpha-D-muramoyl-L-alanyl-D-glutamate + ADP + phosphate + H(+). It participates in cell wall biogenesis; peptidoglycan biosynthesis. Cell wall formation. Catalyzes the addition of glutamate to the nucleotide precursor UDP-N-acetylmuramoyl-L-alanine (UMA). In Pelobacter propionicus (strain DSM 2379 / NBRC 103807 / OttBd1), this protein is UDP-N-acetylmuramoylalanine--D-glutamate ligase.